A 379-amino-acid polypeptide reads, in one-letter code: Succinyl-diaminopimelate desuccinylase (379 aa).

Residue His70 coordinates Zn(2+). Residue Asp72 is part of the active site. Residue Asp103 coordinates Zn(2+). The Proton acceptor role is filled by Glu137. Residues Glu138, Glu166, and His352 each contribute to the Zn(2+) site.

Belongs to the peptidase M20A family. DapE subfamily. In terms of assembly, homodimer. Requires Zn(2+) as cofactor. The cofactor is Co(2+).

The enzyme catalyses N-succinyl-(2S,6S)-2,6-diaminopimelate + H2O = (2S,6S)-2,6-diaminopimelate + succinate. Its pathway is amino-acid biosynthesis; L-lysine biosynthesis via DAP pathway; LL-2,6-diaminopimelate from (S)-tetrahydrodipicolinate (succinylase route): step 3/3. Functionally, catalyzes the hydrolysis of N-succinyl-L,L-diaminopimelic acid (SDAP), forming succinate and LL-2,6-diaminopimelate (DAP), an intermediate involved in the bacterial biosynthesis of lysine and meso-diaminopimelic acid, an essential component of bacterial cell walls. This is Succinyl-diaminopimelate desuccinylase from Shewanella baltica (strain OS223).